Here is a 254-residue protein sequence, read N- to C-terminus: Ribonuclease HII (254 aa).

The 188-residue stretch at 67–254 (IVIAGVDEVG…HRMSFLKNII (188 aa)) folds into the RNase H type-2 domain. Positions 73, 74, and 170 each coordinate a divalent metal cation.

It belongs to the RNase HII family. Mn(2+) is required as a cofactor. It depends on Mg(2+) as a cofactor.

Its subcellular location is the cytoplasm. The enzyme catalyses Endonucleolytic cleavage to 5'-phosphomonoester.. Functionally, endonuclease that specifically degrades the RNA of RNA-DNA hybrids. This chain is Ribonuclease HII, found in Clostridium acetobutylicum (strain ATCC 824 / DSM 792 / JCM 1419 / IAM 19013 / LMG 5710 / NBRC 13948 / NRRL B-527 / VKM B-1787 / 2291 / W).